We begin with the raw amino-acid sequence, 318 residues long: NADH-ubiquinone oxidoreductase chain 1 (318 aa).

8 consecutive transmembrane segments (helical) span residues 2–22, 68–88, 100–120, 146–166, 171–191, 222–242, 253–273, and 293–313; these read FMIN…FLTL, ISMF…MWTP, LGIL…LWSG, LAII…PTLI, HIWL…STLA, LFFL…TILF, ELYT…FLWV, and FLPL…ITAG.

Belongs to the complex I subunit 1 family. In terms of assembly, core subunit of respiratory chain NADH dehydrogenase (Complex I) which is composed of 45 different subunits.

It is found in the mitochondrion inner membrane. It catalyses the reaction a ubiquinone + NADH + 5 H(+)(in) = a ubiquinol + NAD(+) + 4 H(+)(out). Core subunit of the mitochondrial membrane respiratory chain NADH dehydrogenase (Complex I) which catalyzes electron transfer from NADH through the respiratory chain, using ubiquinone as an electron acceptor. Essential for the catalytic activity and assembly of complex I. The protein is NADH-ubiquinone oxidoreductase chain 1 (MT-ND1) of Hipposideros armiger terasensis (Formosan leaf-nosed bat).